The following is a 297-amino-acid chain: uncharacterized protein (297 aa).

3 disordered regions span residues 1 to 20 (MDTL…NADV), 39 to 100 (IEKD…ENLG), and 174 to 297 (VQKA…NEDQ). Residues 101–179 (NDLFVSGIAS…RVLNVQKAKR (79 aa)) enclose the RRM domain. A Phosphoserine modification is found at Ser-184. Basic and acidic residues-rich tracts occupy residues 209–223 (GGYR…DSNR) and 233–253 (PQRE…DSRP). The segment covering 254-263 (RRERHFHGRS) has biased composition (basic residues). Polar residues predominate over residues 287–297 (SHSSVPPNEDQ).

It is found in the nucleus. This is an uncharacterized protein from Schizosaccharomyces pombe (strain 972 / ATCC 24843) (Fission yeast).